We begin with the raw amino-acid sequence, 178 residues long: MLEGVIRESITKANAKALKKDGYLIANVYGKGVENVNGAFKLNPFIKYLKEKKHLIFPVKLGDKTFEVVVQEYQKNPVTNELIHVDLLAVTKGVKSKFKVPVKHQGTPVGLKNKGILMLSKKRISVECAPEHLPDHYLVDVTPLDVNESILVRDLEKHENVKILDHDSIAVIGVIKAK.

The protein belongs to the bacterial ribosomal protein bL25 family. CTC subfamily. In terms of assembly, part of the 50S ribosomal subunit; part of the 5S rRNA/L5/L18/L25 subcomplex. Contacts the 5S rRNA. Binds to the 5S rRNA independently of L5 and L18.

In terms of biological role, this is one of the proteins that binds to the 5S RNA in the ribosome where it forms part of the central protuberance. The sequence is that of Large ribosomal subunit protein bL25 from Helicobacter pylori (strain Shi470).